Consider the following 201-residue polypeptide: FMN-dependent NADH:quinone oxidoreductase (201 aa).

Residues S10, 16 to 18 (SQS), 96 to 99 (MYNF), and 140 to 143 (SRGG) contribute to the FMN site.

The protein belongs to the azoreductase type 1 family. In terms of assembly, homodimer. It depends on FMN as a cofactor.

It carries out the reaction 2 a quinone + NADH + H(+) = 2 a 1,4-benzosemiquinone + NAD(+). It catalyses the reaction N,N-dimethyl-1,4-phenylenediamine + anthranilate + 2 NAD(+) = 2-(4-dimethylaminophenyl)diazenylbenzoate + 2 NADH + 2 H(+). Its function is as follows. Quinone reductase that provides resistance to thiol-specific stress caused by electrophilic quinones. Functionally, also exhibits azoreductase activity. Catalyzes the reductive cleavage of the azo bond in aromatic azo compounds to the corresponding amines. The polypeptide is FMN-dependent NADH:quinone oxidoreductase (Escherichia coli O9:H4 (strain HS)).